A 203-amino-acid chain; its full sequence is ATP-dependent dethiobiotin synthetase BioD (203 aa).

ATP is bound at residue 11–16 (NVGKTI). T15 lines the Mg(2+) pocket. K31 is an active-site residue. T35 contributes to the substrate binding site. ATP contacts are provided by residues D42 and 94-97 (EGAG). Mg(2+) is bound by residues D42 and E94.

This sequence belongs to the dethiobiotin synthetase family. Homodimer. Requires Mg(2+) as cofactor.

It is found in the cytoplasm. It carries out the reaction (7R,8S)-7,8-diammoniononanoate + CO2 + ATP = (4R,5S)-dethiobiotin + ADP + phosphate + 3 H(+). It participates in cofactor biosynthesis; biotin biosynthesis; biotin from 7,8-diaminononanoate: step 1/2. Catalyzes a mechanistically unusual reaction, the ATP-dependent insertion of CO2 between the N7 and N8 nitrogen atoms of 7,8-diaminopelargonic acid (DAPA, also called 7,8-diammoniononanoate) to form a ureido ring. The sequence is that of ATP-dependent dethiobiotin synthetase BioD from Lawsonia intracellularis (strain PHE/MN1-00).